Here is a 165-residue protein sequence, read N- to C-terminus: Growth arrest and DNA damage-inducible protein GADD45 alpha (165 aa).

Position 2 is a phosphothreonine (Thr-2).

Belongs to the GADD45 family. In terms of assembly, interacts with AURKA, PCNA, GADD45GIP1 and MAPK14.

It localises to the nucleus. Functionally, might affect PCNA interaction with some CDK (cell division protein kinase) complexes; stimulates DNA excision repair in vitro and inhibits entry of cells into S phase. In T-cells, functions as a regulator of p38 MAPKs by inhibiting p88 phosphorylation and activity. In Rattus norvegicus (Rat), this protein is Growth arrest and DNA damage-inducible protein GADD45 alpha (Gadd45a).